Here is a 198-residue protein sequence, read N- to C-terminus: RNA-free ribonuclease P (198 aa).

It belongs to the HARP family.

It catalyses the reaction Endonucleolytic cleavage of RNA, removing 5'-extranucleotides from tRNA precursor.. Its function is as follows. RNA-free RNase P that catalyzes the removal of the 5'-leader sequence from pre-tRNA to produce the mature 5'-terminus. The chain is RNA-free ribonuclease P from Nitrosococcus oceani (strain ATCC 19707 / BCRC 17464 / JCM 30415 / NCIMB 11848 / C-107).